The sequence spans 954 residues: Protein translocase subunit SecA (954 aa).

ATP-binding positions include Gln86, 104 to 108 (GEGKT), and Asp494. Residues 520-549 (LDPDNPLGSASTTSRGGGQGFGPASPKPKK) form a disordered region.

Belongs to the SecA family. In terms of assembly, monomer and homodimer. Part of the essential Sec protein translocation apparatus which comprises SecA, SecYEG and auxiliary proteins SecDF. Other proteins may also be involved.

It localises to the cell inner membrane. The protein localises to the cellular thylakoid membrane. It is found in the cytoplasm. It carries out the reaction ATP + H2O + cellular proteinSide 1 = ADP + phosphate + cellular proteinSide 2.. In terms of biological role, part of the Sec protein translocase complex. Interacts with the SecYEG preprotein conducting channel. Has a central role in coupling the hydrolysis of ATP to the transfer of proteins into and across the cell membrane, serving as an ATP-driven molecular motor driving the stepwise translocation of polypeptide chains across the membrane. Probably participates in protein translocation into and across both the cytoplasmic and thylakoid membranes in cyanobacterial cells. The polypeptide is Protein translocase subunit SecA (Synechococcus sp. (strain JA-3-3Ab) (Cyanobacteria bacterium Yellowstone A-Prime)).